The primary structure comprises 124 residues: Probable dihydroneopterin aldolase (124 aa).

Substrate-binding positions include Glu23, Tyr56, and 75-76; that span reads IE. Lys103 acts as the Proton donor/acceptor in catalysis.

Belongs to the DHNA family.

It catalyses the reaction 7,8-dihydroneopterin = 6-hydroxymethyl-7,8-dihydropterin + glycolaldehyde. It participates in cofactor biosynthesis; tetrahydrofolate biosynthesis; 2-amino-4-hydroxy-6-hydroxymethyl-7,8-dihydropteridine diphosphate from 7,8-dihydroneopterin triphosphate: step 3/4. Its function is as follows. Catalyzes the conversion of 7,8-dihydroneopterin to 6-hydroxymethyl-7,8-dihydropterin. In Chlamydia trachomatis serovar D (strain ATCC VR-885 / DSM 19411 / UW-3/Cx), this protein is Probable dihydroneopterin aldolase (folB).